A 473-amino-acid chain; its full sequence is Protein nucleotidyltransferase YdiU (473 aa).

Residues glycine 79, glycine 81, arginine 82, lysine 102, aspartate 114, glycine 115, arginine 165, and arginine 172 each coordinate ATP. The active-site Proton acceptor is aspartate 241. Asparagine 242 and aspartate 251 together coordinate Mg(2+). Aspartate 251 is a binding site for ATP.

This sequence belongs to the SELO family. Mg(2+) is required as a cofactor. The cofactor is Mn(2+).

The catalysed reaction is L-seryl-[protein] + ATP = 3-O-(5'-adenylyl)-L-seryl-[protein] + diphosphate. It catalyses the reaction L-threonyl-[protein] + ATP = 3-O-(5'-adenylyl)-L-threonyl-[protein] + diphosphate. It carries out the reaction L-tyrosyl-[protein] + ATP = O-(5'-adenylyl)-L-tyrosyl-[protein] + diphosphate. The enzyme catalyses L-histidyl-[protein] + UTP = N(tele)-(5'-uridylyl)-L-histidyl-[protein] + diphosphate. The catalysed reaction is L-seryl-[protein] + UTP = O-(5'-uridylyl)-L-seryl-[protein] + diphosphate. It catalyses the reaction L-tyrosyl-[protein] + UTP = O-(5'-uridylyl)-L-tyrosyl-[protein] + diphosphate. Functionally, nucleotidyltransferase involved in the post-translational modification of proteins. It can catalyze the addition of adenosine monophosphate (AMP) or uridine monophosphate (UMP) to a protein, resulting in modifications known as AMPylation and UMPylation. The polypeptide is Protein nucleotidyltransferase YdiU (Marinomonas sp. (strain MWYL1)).